A 449-amino-acid polypeptide reads, in one-letter code: Glycine receptor subunit alpha-2 (449 aa).

Residues 1–27 form the signal peptide; it reads MTRPSVKLLTTLLACLMEMLNFRVSSG. Over 28–255 the chain is Extracellular; sequence KDPDLLSSSS…FHLERQMGYY (228 aa). N-linked (GlcNAc...) asparagine glycosylation occurs at N70. Residues R97 and S161 each coordinate glycine. Position 97 (R97) interacts with strychnine. An intrachain disulfide couples C170 to C184. Positions 224 and 226 each coordinate Zn(2+). C230 and C241 form a disulfide bridge. Glycine is bound at residue T236. H247 contacts Zn(2+). The helical transmembrane segment at 256–276 threads the bilayer; that stretch reads LIQMYIPSLLIVILSWVSFWI. Residues 277-282 lie on the Cytoplasmic side of the membrane; the sequence is NMDAAP. The helical transmembrane segment at 283-302 threads the bilayer; the sequence is ARVALGITTVLTMTTQSSGS. At 303-313 the chain is on the extracellular side; it reads RASLPKVSYVK. Residues 314–334 traverse the membrane as a helical segment; that stretch reads AIDIWMAVCLLFVFAALLEYA. At 335 to 420 the chain is on the cytoplasmic side; that stretch reads GVNFVSRQQK…RAKRIDTISR (86 aa). The chain crosses the membrane as a helical span at residues 421–441; the sequence is AAFPLAFLIFNVFYWITYKII. The Extracellular portion of the chain corresponds to 442 to 449; it reads RHESARKD.

The protein belongs to the ligand-gated ion channel (TC 1.A.9) family.

The protein localises to the postsynaptic cell membrane. Its subcellular location is the synapse. It is found in the cell membrane. The protein resides in the cell projection. It carries out the reaction chloride(in) = chloride(out). Its activity is regulated as follows. Channel opening is triggered by extracellular glycine. Channel opening is also triggered by taurine and beta-alanine. Inhibited by strychnine. Functionally, subunit of heteromeric glycine-gated chloride channels. Plays a role in synaptic plasticity. Contributes to the generation of inhibitory postsynaptic currents, and is involved in the down-regulation of neuronal excitability. The polypeptide is Glycine receptor subunit alpha-2 (glra2) (Danio rerio (Zebrafish)).